The sequence spans 273 residues: 2,3,4,5-tetrahydropyridine-2,6-dicarboxylate N-succinyltransferase (273 aa).

Substrate-binding residues include R104 and D141.

The protein belongs to the transferase hexapeptide repeat family. Homotrimer.

The protein localises to the cytoplasm. It carries out the reaction (S)-2,3,4,5-tetrahydrodipicolinate + succinyl-CoA + H2O = (S)-2-succinylamino-6-oxoheptanedioate + CoA. It participates in amino-acid biosynthesis; L-lysine biosynthesis via DAP pathway; LL-2,6-diaminopimelate from (S)-tetrahydrodipicolinate (succinylase route): step 1/3. The protein is 2,3,4,5-tetrahydropyridine-2,6-dicarboxylate N-succinyltransferase of Nitrosospira multiformis (strain ATCC 25196 / NCIMB 11849 / C 71).